Reading from the N-terminus, the 306-residue chain is MAAVDDLQFEEFGDGATLLAANPDATTINIEDPSVSFGHQPRPPGSVGREEDEELLGNNDSDETELLAGQKRSSPFWTFEYYQTFFDVDTYQVFDRIKGSLLPVPGKNFVRLYIRSNPDLYGPFWICATLVFAIAISGNLSNFLIHLGEKTYHYVPEFQKVSIAATVIYAYAWLVPLALWGFLLWRNSKVMSMVSYSFLEIVCVYGYSLFIYIPTAVLWIIPQRVVRWVLVMIALGVSGSVLVMTFWPAVREDNRRVALATIVTIVLLHVLLSVGCLAYFFDAPEMDHLPAAITTPNQTVTAAKSS.

At 1 to 119 (MAAVDDLQFE…VRLYIRSNPD (119 aa)) the chain is on the cytoplasmic side. The segment at 30–63 (IEDPSVSFGHQPRPPGSVGREEDEELLGNNDSDE) is disordered. The span at 50-63 (EEDEELLGNNDSDE) shows a compositional bias: acidic residues. Residues 120-140 (LYGPFWICATLVFAIAISGNL) form a helical membrane-spanning segment. Residues 141–162 (SNFLIHLGEKTYHYVPEFQKVS) lie on the Lumenal side of the membrane. A helical transmembrane segment spans residues 163–183 (IAATVIYAYAWLVPLALWGFL). Residues 184–200 (LWRNSKVMSMVSYSFLE) are Cytoplasmic-facing. The helical transmembrane segment at 201–221 (IVCVYGYSLFIYIPTAVLWII) threads the bilayer. Residues 222–227 (PQRVVR) lie on the Lumenal side of the membrane. The chain crosses the membrane as a helical span at residues 228–248 (WVLVMIALGVSGSVLVMTFWP). Residues 249 to 256 (AVREDNRR) lie on the Cytoplasmic side of the membrane. The chain crosses the membrane as a helical span at residues 257–277 (VALATIVTIVLLHVLLSVGCL). The Lumenal portion of the chain corresponds to 278–306 (AYFFDAPEMDHLPAAITTPNQTVTAAKSS). The N-linked (GlcNAc...) asparagine glycan is linked to N297.

This sequence belongs to the YIP1 family. As to quaternary structure, interacts with YIPF6; this interaction may stabilize YIPF1. May also form a ternary complex with YIPF2 and YIPF6.

It localises to the golgi apparatus. The protein localises to the cis-Golgi network membrane. It is found in the trans-Golgi network membrane. Its subcellular location is the late endosome membrane. This Mus musculus (Mouse) protein is Protein YIPF1 (Yipf1).